The following is a 235-amino-acid chain: Derlin-3 (235 aa).

Residues 1-22 are Cytoplasmic-facing; sequence MAWQGLAAEFLQVPAVTRAYTA. Residues 23–43 traverse the membrane as a helical segment; it reads ACVLTTAAVQLELLSPFQLYF. Residues 44–58 are Lumenal-facing; sequence NPHLVFRKFQVWRLV. A helical transmembrane segment spans residues 59–79; it reads TNFLFFGPLGFSFFFNMLFVF. The Cytoplasmic portion of the chain corresponds to 80–98; sequence RYCRMLEEGSFRGRTADFV. Residues 99–119 traverse the membrane as a helical segment; it reads FMFLFGGVLMTLLGLLGSLFF. At 120 to 157 the chain is on the lumenal side; the sequence is LGQALMAMLVYVWSRRSPRVRVNFFGLLTFQAPFLPWA. The chain crosses the membrane as a helical span at residues 158-178; the sequence is LMGFSLLLGNSILVDLLGIAV. Residues 179-235 lie on the Cytoplasmic side of the membrane; sequence GHIYYFLEDVFPNQPGGKRLLQTPGFLKLLLDAPAEDPNYLPLPEEQPGPHLPPPQQ. Residues 216 to 235 form a disordered region; that stretch reads PNYLPLPEEQPGPHLPPPQQ. The span at 223–235 shows a compositional bias: pro residues; it reads EEQPGPHLPPPQQ.

The protein belongs to the derlin family. In terms of assembly, forms homo- and heterooligomers with DERL2 and, to a lesser extent, with DERL1. Interacts with VCP and EDEM1. Interacts with SELENOK and SELENOS. Interacts with the signal recognition particle/SRP and the SRP receptor; in the process of endoplasmic reticulum stress-induced pre-emptive quality control. As to expression, unlike DERL1 and DERL2, restricted to several tissues. Expressed at high levels in placenta, pancreas, spleen and small intestine.

The protein localises to the endoplasmic reticulum membrane. Its function is as follows. Functional component of endoplasmic reticulum-associated degradation (ERAD) for misfolded lumenal glycoproteins, but not that of misfolded nonglycoproteins. May act by forming a channel that allows the retrotranslocation of misfolded glycoproteins into the cytosol where they are ubiquitinated and degraded by the proteasome. May mediate the interaction between VCP and the misfolded glycoproteins. May be involved in endoplasmic reticulum stress-induced pre-emptive quality control, a mechanism that selectively attenuates the translocation of newly synthesized proteins into the endoplasmic reticulum and reroutes them to the cytosol for proteasomal degradation. The polypeptide is Derlin-3 (Homo sapiens (Human)).